Reading from the N-terminus, the 74-residue chain is Defensin (74 aa).

The N-terminal stretch at 1-22 (MRGLCICLVFLLVCGLVSATAA) is a signal peptide. The propeptide occupies 23 to 36 (APAESEVAHLRVRR). Cystine bridges form between C40–C61, C47–C69, and C51–C71.

As to expression, hemolymph.

It localises to the secreted. Antibacterial activity against Gram-positive and Gram-negative bacteria. The polypeptide is Defensin (VSNA1) (Dermacentor variabilis (American dog tick)).